The primary structure comprises 581 residues: MMNPDGGDGDRLEAAGAGSSSAQQGHPTMEWRFAQVFGERAAGEDVQEVDIISAIEFDKSGDHLATGDRGGRVVLFERTDARDNASRREMERQDAPITRHPEFRYKSEFQSHEPEFDYLKSLEIEEKINKIRWCQTANNSLSLLSTNDKTIKYWKVQEKKVKQVSVMNLDSRSVGTGTSSSASTSSSRGLLPNGGCSDKSSFLNSDILFPPGGYPSLRLPVVVASQDVNLVARCRRVYAHAHDYHINSISTNSDGETYISADDLRINLWNLEINNQSFNIVDVKPPNMEDLTEVITCAEFHPTHCNTLAYSSSKGSIRLIDLRQSALCDNHSKIFEEHEAPGSRSFFTEIIASISDIKFSRDGRYILSRDYMTLKLWDLNMDSGPVSTFQVHEHLRPKLCDLYENDSIFDKFECCLSGDGLHVATGSYGNLFRVFGCTPGSTEATTLEASRNPMRRQIVNPTRPTRTLTSLARGVRRGGENQGVDANGNSFDFSTKLLHLAWHPTENSIACAAANSLYMYYARRCLRKFIVFGSLLEAACLHMQPEIWCRMLSSIPPLGPKEAVDAHKMAFVAVTASLLIL.

The segment at 1-27 (MMNPDGGDGDRLEAAGAGSSSAQQGHP) is disordered. Residues 14 to 25 (AAGAGSSSAQQG) are compositionally biased toward low complexity. WD repeat units lie at residues 47 to 86 (QEVDIISAIEFDKSGDHLATGDRGGRVVLFERTDARDNAS) and 123 to 164 (EIEE…VKQV). The span at 172 to 189 (RSVGTGTSSSASTSSSRG) shows a compositional bias: low complexity. Positions 172 to 192 (RSVGTGTSSSASTSSSRGLLP) are disordered. 4 WD repeats span residues 241–279 (AHDYHINSISTNSDGETYISADDLRINLWNLEINNQSFN), 290–330 (DLTE…LCDN), 349–387 (EIIASISDIKFSRDGRYILSRDYMTLKLWDLNMDSGPVS), and 492–530 (DFSTKLLHLAWHPTENSIACAAANSLYMYYARRCLRKFI).

The protein belongs to the phosphatase 2A regulatory subunit B family. PP2A consists of a common heteromeric enzyme, composed of a catalytic subunit (subunits C), a constant regulatory subunit (subunit A), and a variety of regulatory subunits such as subunits B (the R2/B/PR55/B55, R3/B''/PR72/PR130/PR59 and R5/B'/B56 families).

In terms of biological role, the B regulatory subunit may modulate substrate selectivity and catalytic activity, and may also direct the localization of the catalytic enzyme to a particular subcellular compartment. This is Serine/threonine protein phosphatase 2A 55 kDa regulatory subunit B alpha isoform from Oryza sativa subsp. japonica (Rice).